Reading from the N-terminus, the 123-residue chain is Small ribosomal subunit protein uS12 (123 aa).

At D89 the chain carries 3-methylthioaspartic acid.

It belongs to the universal ribosomal protein uS12 family. Part of the 30S ribosomal subunit. Contacts proteins S8 and S17. May interact with IF1 in the 30S initiation complex.

In terms of biological role, with S4 and S5 plays an important role in translational accuracy. Its function is as follows. Interacts with and stabilizes bases of the 16S rRNA that are involved in tRNA selection in the A site and with the mRNA backbone. Located at the interface of the 30S and 50S subunits, it traverses the body of the 30S subunit contacting proteins on the other side and probably holding the rRNA structure together. The combined cluster of proteins S8, S12 and S17 appears to hold together the shoulder and platform of the 30S subunit. This Gluconobacter oxydans (strain 621H) (Gluconobacter suboxydans) protein is Small ribosomal subunit protein uS12.